The primary structure comprises 273 residues: Putative pyruvate, phosphate dikinase regulatory protein (273 aa).

149–156 (GPSRTSKT) contacts ADP.

Belongs to the pyruvate, phosphate/water dikinase regulatory protein family. PDRP subfamily.

The catalysed reaction is N(tele)-phospho-L-histidyl/L-threonyl-[pyruvate, phosphate dikinase] + ADP = N(tele)-phospho-L-histidyl/O-phospho-L-threonyl-[pyruvate, phosphate dikinase] + AMP + H(+). The enzyme catalyses N(tele)-phospho-L-histidyl/O-phospho-L-threonyl-[pyruvate, phosphate dikinase] + phosphate + H(+) = N(tele)-phospho-L-histidyl/L-threonyl-[pyruvate, phosphate dikinase] + diphosphate. Its function is as follows. Bifunctional serine/threonine kinase and phosphorylase involved in the regulation of the pyruvate, phosphate dikinase (PPDK) by catalyzing its phosphorylation/dephosphorylation. This chain is Putative pyruvate, phosphate dikinase regulatory protein, found in Rickettsia bellii (strain OSU 85-389).